The primary structure comprises 174 residues: Alpha-crystallin B chain (174 aa).

Met1 is subject to N-acetylmethionine. The 109-residue stretch at 55-163 (RMPSWLETGL…PERSIPITRE (109 aa)) folds into the sHSP domain. Positions 82, 103, 105, and 110 each coordinate Zn(2+). The segment at 148–174 (RKQSDVPERSIPITREEKPAIAGAQRK) is disordered. A compositionally biased stretch (basic and acidic residues) spans 149 to 166 (KQSDVPERSIPITREEKP).

The protein belongs to the small heat shock protein (HSP20) family. Heteromer composed of three CRYAA and one CRYAB subunits. Aggregates with homologous proteins, including the small heat shock protein HSPB1, to form large heteromeric complexes. Inter-subunit bridging via zinc ions enhances stability, which is crucial as there is no protein turn over in the lens. In terms of tissue distribution, lens as well as other tissues.

Functionally, may contribute to the transparency and refractive index of the lens. This Anas platyrhynchos (Mallard) protein is Alpha-crystallin B chain (CRYAB).